The following is a 273-amino-acid chain: MNNRVHQGHLARKRFGQNFLNDQFVIDSIVSAINPQKGQAMVEIGPGLAALTEPVGERLDQLTVIELDRDLAARLQTHPFLGPKLTIYQQDAMTMDFGELSQKMGQPLRVFGNLPYNISTPLMFHLFSYTDAIADMHFMLQKEVVNRLVAGPNSKAYGRLSVMAQYFCQVIPVLEVPPTAFTPPPKVDSAVVRLVPHATPPHPVKELRLLSRLTTEAFNQRRKTIRNSLGNVFSPEVLTSLGIDPAMRAENISVAQYCQMANYLADNPPSKES.

Asn18, Leu20, Gly45, Glu66, Asp91, and Asn113 together coordinate S-adenosyl-L-methionine.

The protein belongs to the class I-like SAM-binding methyltransferase superfamily. rRNA adenine N(6)-methyltransferase family. RsmA subfamily.

The protein localises to the cytoplasm. It catalyses the reaction adenosine(1518)/adenosine(1519) in 16S rRNA + 4 S-adenosyl-L-methionine = N(6)-dimethyladenosine(1518)/N(6)-dimethyladenosine(1519) in 16S rRNA + 4 S-adenosyl-L-homocysteine + 4 H(+). Its function is as follows. Specifically dimethylates two adjacent adenosines (A1518 and A1519) in the loop of a conserved hairpin near the 3'-end of 16S rRNA in the 30S particle. May play a critical role in biogenesis of 30S subunits. The sequence is that of Ribosomal RNA small subunit methyltransferase A from Cronobacter sakazakii (strain ATCC BAA-894) (Enterobacter sakazakii).